The chain runs to 261 residues: Vacuolar protein sorting-associated protein 37D (261 aa).

The 90-residue stretch at 93–182 folds into the VPS37 C-terminal domain; it reads AENCADKLQR…RRRERSAQPA (90 aa). A disordered region spans residues 172 to 261; that stretch reads LRRRERSAQP…RPSQPEPPHR (90 aa). Residues 181–195 show a composition bias toward low complexity; it reads PAPTTAAAAAAAATA. Composition is skewed to pro residues over residues 215–224 and 231–261; these read GPPPAVPRSL and PVPPVKGSPGCPFGPAPLLSPRPSQPEPPHR.

This sequence belongs to the VPS37 family. As to quaternary structure, component of the ESCRT-I complex (endosomal sorting complex required for transport I) which consists of TSG101, VPS28, a VPS37 protein (VPS37A to -D) and MVB12A or MVB12B in a 1:1:1:1 stoichiometry. Interacts with TSG101 and MVB12A. Component of the ESCRT-I complex (endosomal sorting complex required for transport I) which consists of TSG101, VPS28, a VPS37 protein (VPS37A to -D) and UBAP1 in a 1:1:1:1 stoichiometry.

Its subcellular location is the late endosome membrane. Component of the ESCRT-I complex, a regulator of vesicular trafficking process. Required for the sorting of endocytic ubiquitinated cargos into multivesicular bodies. May be involved in cell growth and differentiation. This Mus musculus (Mouse) protein is Vacuolar protein sorting-associated protein 37D.